The following is a 521-amino-acid chain: Bifunctional purine biosynthesis protein PurH (521 aa).

The MGS-like domain maps to 1-145 (MIKQALISVS…KNHRDVTVVV (145 aa)).

The protein belongs to the PurH family.

The catalysed reaction is (6R)-10-formyltetrahydrofolate + 5-amino-1-(5-phospho-beta-D-ribosyl)imidazole-4-carboxamide = 5-formamido-1-(5-phospho-D-ribosyl)imidazole-4-carboxamide + (6S)-5,6,7,8-tetrahydrofolate. It catalyses the reaction IMP + H2O = 5-formamido-1-(5-phospho-D-ribosyl)imidazole-4-carboxamide. It functions in the pathway purine metabolism; IMP biosynthesis via de novo pathway; 5-formamido-1-(5-phospho-D-ribosyl)imidazole-4-carboxamide from 5-amino-1-(5-phospho-D-ribosyl)imidazole-4-carboxamide (10-formyl THF route): step 1/1. Its pathway is purine metabolism; IMP biosynthesis via de novo pathway; IMP from 5-formamido-1-(5-phospho-D-ribosyl)imidazole-4-carboxamide: step 1/1. This Burkholderia cenocepacia (strain HI2424) protein is Bifunctional purine biosynthesis protein PurH.